A 397-amino-acid chain; its full sequence is Bifunctional arginine demethylase and lysyl-hydroxylase psr-1 (397 aa).

The JmjC domain occupies 146–310 (RKTKKLSEDY…LVWPKTVRGR (165 aa)). Substrate is bound at residue T189. Fe cation is bound by residues H192 and D194. A 2-oxoglutarate-binding site is contributed by N202. K209 provides a ligand contact to substrate. H278 is a binding site for Fe cation. Residue T290 coordinates 2-oxoglutarate. Over residues 334–344 (SCTDTPPQSLN) the composition is skewed to polar residues. The tract at residues 334 to 383 (SCTDTPPQSLNDSSSDSSSSSSSSDDSSDSETEEDSGRCGLGNRKRRNDV) is disordered. The segment covering 345–358 (DSSSDSSSSSSSSD) has biased composition (low complexity).

It belongs to the JMJD6 family. In terms of assembly, interacts with ced-5 and ced-12. It depends on Fe(2+) as a cofactor.

The protein resides in the nucleus. Its function is as follows. Dioxygenase that can both act as a histone arginine demethylase and a lysyl-hydroxylase. In Caenorhabditis briggsae, this protein is Bifunctional arginine demethylase and lysyl-hydroxylase psr-1 (psr-1).